The following is a 1337-amino-acid chain: Protein cordon-bleu (1337 aa).

A disordered region spans residues 1–41 (MDAPRALAAKPPTGRKMKARAPPPPGKPAAQNVHSEQKLPH). Residues serine 47, serine 50, serine 212, serine 235, serine 272, and serine 294 each carry the phosphoserine modification. 2 disordered regions span residues 260–556 (SKAE…NDDE) and 647–768 (IASQ…HHGQ). Residues 288–317 (CVTTPNSPSLHSRSLTLGPSLSLGNISGVS) show a composition bias toward polar residues. Residues 323 to 328 (KKRRAP) carry the KKRRAP 1 motif. 2 positions are modified to phosphoserine: serine 346 and serine 349. Residues 356 to 361 (KKRRAP) carry the KKRRAP 2 motif. Residues 361-374 (PAPPPPQQPPPSPV) show a composition bias toward pro residues. Serine 372 is subject to Phosphoserine. The segment covering 377–387 (NRKEDKEENRK) has biased composition (basic and acidic residues). A compositionally biased stretch (pro residues) spans 411–423 (LVLPPPPPYPPPD). Acidic residues predominate over residues 469–480 (ESEETASEDTTE). Residues 484–500 (VMSSPSDAISLDSQQDS) show a composition bias toward polar residues. Threonine 522 bears the Phosphothreonine mark. Residues 526-541 (GPQKSPSWGKSGSGSS) show a composition bias toward low complexity. Polar residues-rich tracts occupy residues 647-666 (IASQ…QPFV) and 687-710 (QPTL…TSLV). A Phosphoserine modification is found at serine 649. Residues 714–736 (LIDDPKAKDKGKVHGSSHSEKTQ) are compositionally biased toward basic and acidic residues. A Phosphoserine modification is found at serine 816. Disordered regions lie at residues 892 to 923 (TPQQ…SVKV) and 967 to 991 (KATT…DDAA). Serine 1038 carries the post-translational modification Phosphoserine. A compositionally biased stretch (polar residues) spans 1070 to 1090 (GFNEKQTTSNQKANSTSNFSQ). Disordered stretches follow at residues 1070 to 1094 (GFNE…ALDK), 1113 to 1133 (MNGS…KEST), 1145 to 1168 (KPSS…FGPK), and 1192 to 1221 (AIHS…SYVE). Serine 1128 is subject to Phosphoserine. 2 consecutive WH2 domains span residues 1185 to 1205 (LHSA…LRKT) and 1225 to 1245 (ERSA…LRKV). Basic and acidic residues predominate over residues 1197 to 1214 (GGREKLRKTAEQTSEGRP). The segment at 1262–1310 (GAPGLDKPQQEDLGLPPPPALPPPPAPAPQAPSASVTVSRFSTGTPSNS) is disordered. The span at 1276-1291 (LPPPPALPPPPAPAPQ) shows a compositional bias: pro residues. Residues 1297–1310 (VTVSRFSTGTPSNS) show a composition bias toward polar residues. Phosphoserine is present on serine 1303. The region spanning 1313 to 1333 (ARQALMDAIRSGTGAARLRKV) is the WH2 3 domain.

As to quaternary structure, identified in a complex composed of COBL, PACSIN1 and WASL. Interacts with PACSIN1, PACSIN2 and PACSIN3. Identified in a complex composed of ACTA1, COBL, GSN and TMSB4X. Interacts (via WH2 domains) with actin monomers. Interacts with DBNL. As to expression, detected in brain cortex and in the Purkinje cell layer in the cerebellum. Detected in hippocampus neurons, and at lower levels in testis, lung and spleen (at protein level). Detected in embryonic neural tube.

Its subcellular location is the cell membrane. The protein localises to the cytoplasm. It localises to the cytoskeleton. It is found in the cell projection. The protein resides in the ruffle. In terms of biological role, plays an important role in the reorganization of the actin cytoskeleton. Binds to and sequesters actin monomers (G actin). Nucleates actin polymerization by assembling three actin monomers in cross-filament orientation and thereby promotes growth of actin filaments at the barbed end. Can also mediate actin depolymerization at barbed ends and severing of actin filaments. Promotes formation of cell ruffles. Regulates neuron morphogenesis and increases branching of axons and dendrites. Regulates dendrite branching in Purkinje cells. This chain is Protein cordon-bleu (Cobl), found in Mus musculus (Mouse).